A 360-amino-acid chain; its full sequence is Hydroxycarboxylic acid receptor 2 (360 aa).

Over 1 to 30 (MSKQNHFLVINGKNCCVFRDENIAKVLPPV) the chain is Extracellular. The chain crosses the membrane as a helical span at residues 31–51 (LGLEFVFGLLGNGLALWIFCF). The Cytoplasmic segment spans residues 52-60 (HLKSWKSSR). A helical transmembrane segment spans residues 61–81 (IFLFNLAVADFLLIICLPFLT). The Extracellular portion of the chain corresponds to 82-98 (DNYVQNWDWRFGSIPCR). Residues Cys97 and Cys174 are joined by a disulfide bond. Residues 99-119 (VMLFMLAMNRQGSIIFLTVVA) form a helical membrane-spanning segment. Residues 120–140 (VDRYFRVVHPHHFLNKISNRT) are Cytoplasmic-facing. The chain crosses the membrane as a helical span at residues 141–161 (AAIISCFLWGITIGLTVHLLY). Over 162–189 (TDMMTRNGDANLCSSFSICYTFRWHDAM) the chain is Extracellular. The helical transmembrane segment at 190-210 (FLLEFFLPLGIILFCSGRIIW) threads the bilayer. Over 211-226 (SLRQRQMDRHVKIKRA) the chain is Cytoplasmic. The helical transmembrane segment at 227–247 (INFIMVVAIVFVICFLPSVAV) threads the bilayer. Residues 248 to 270 (RIRIFWLLYKHNVRNCDIYSSVD) lie on the Extracellular side of the membrane. The chain crosses the membrane as a helical span at residues 271-291 (LAFFTTLSFTYMNSMLDPVVY). Over 292–360 (YFSSPSFPNF…SPPYLASTSR (69 aa)) the chain is Cytoplasmic. A disordered region spans residues 320–360 (NNRSTSVELTGDPSTIRSIPGALMTDPSEPGSPPYLASTSR). Polar residues predominate over residues 321-336 (NRSTSVELTGDPSTIR). The residue at position 325 (Ser325) is a Phosphoserine.

Belongs to the G-protein coupled receptor 1 family. Expressed in adipose tissue, lung and spleen.

The protein localises to the cell membrane. In terms of biological role, acts as a high affinity receptor for both nicotinic acid (also known as niacin) and (D)-beta-hydroxybutyrate and mediates increased adiponectin secretion and decreased lipolysis through G(i)-protein-mediated inhibition of adenylyl cyclase. This pharmacological effect requires nicotinic acid doses that are much higher than those provided by a normal diet. Mediates nicotinic acid-induced apoptosis in mature neutrophils. Receptor activation by nicotinic acid results in reduced cAMP levels which may affect activity of cAMP-dependent protein kinase A and phosphorylation of target proteins, leading to neutrophil apoptosis. The rank order of potency for the displacement of nicotinic acid binding is 5-methyl pyrazole-3-carboxylic acid = pyridine-3-acetic acid &gt; acifran &gt; 5-methyl nicotinic acid = acipimox &gt;&gt; nicotinuric acid = nicotinamide. The sequence is that of Hydroxycarboxylic acid receptor 2 (Hcar2) from Rattus norvegicus (Rat).